The primary structure comprises 237 residues: Sugar fermentation stimulation protein homolog (237 aa).

Belongs to the SfsA family.

This Azorhizobium caulinodans (strain ATCC 43989 / DSM 5975 / JCM 20966 / LMG 6465 / NBRC 14845 / NCIMB 13405 / ORS 571) protein is Sugar fermentation stimulation protein homolog.